Reading from the N-terminus, the 275-residue chain is Undecaprenyl-diphosphatase (275 aa).

8 consecutive transmembrane segments (helical) span residues leucine 2–isoleucine 22, phenylalanine 43–tyrosine 63, tryptophan 83–leucine 103, methionine 111–leucine 131, valine 161–isoleucine 181, tyrosine 186–leucine 206, isoleucine 225–leucine 245, and proline 255–alanine 275.

Belongs to the UppP family.

It localises to the cell membrane. The enzyme catalyses di-trans,octa-cis-undecaprenyl diphosphate + H2O = di-trans,octa-cis-undecaprenyl phosphate + phosphate + H(+). Its function is as follows. Catalyzes the dephosphorylation of undecaprenyl diphosphate (UPP). Confers resistance to bacitracin. The chain is Undecaprenyl-diphosphatase from Lactobacillus delbrueckii subsp. bulgaricus (strain ATCC 11842 / DSM 20081 / BCRC 10696 / JCM 1002 / NBRC 13953 / NCIMB 11778 / NCTC 12712 / WDCM 00102 / Lb 14).